The chain runs to 623 residues: Protein EDS1 (623 aa).

Alanine 2 carries the N-acetylalanine modification. Residue serine 123 is the Nucleophile of the active site. Catalysis depends on charge relay system residues aspartate 187 and histidine 317. The stretch at 358 to 383 forms a coiled coil; the sequence is VQAALEEEKKRVENQKKIIQVIEQER.

As to quaternary structure, homodimer. Interacts with RPS4, RPS6, SNC1, SRFR1, AvrRps4 and HopA1. Part of a nuclear complex made of EDS1, PAD4 and SAG101, that can be redirected to the cytoplasm in the presence of an extranuclear form of EDS1. Interacts (via N-terminus) with PAD4 (via N-terminus). Interacts (via N-terminus) with SAG101. EDS1-SAG101 and EDS1-PAD4 form separate complexes in pathogen-unchallenged cells. Part of a nuclear protein complex made of VICTR, PAD4 and EDS1. Interacts with VICTR.

It localises to the nucleus. The protein resides in the cytoplasm. It is found in the microsome. Functionally, positive regulator of basal resistance and of effector-triggered immunity specifically mediated by TIR-NB-LRR (TNL) resistance proteins. Disruption by bacterial effector of EDS1-TIR-NB-LRR resistance protein interactions constitutes the first step in resistance activation. Acts redundantly with salicylic acid to regulate resistance gene-mediated signaling. Triggers early plant defenses and hypersensitive response independently of PAD4, and then recruits PAD4 to potentiate plant defenses through the accumulation of salicylic acid. Nuclear localization is essential for basal and TNL-conditioned immunity and for reprogramming defense gene expression, while cytoplasmic EDS1 is required to induce a complete immune response. Heterodimerization with PAD4 and/or SGA101 is necessary for TNL-mediated effector-triggered immunity. Contributes to nonhost resistance against E.amylovora. Loss of EDS1-PAD4 interaction compromises basal but not TNL-triggered resistance. Necessary for systemic acquired resistance (SAR) signal generation and perception. Has no direct lipase activity. Putative lipase activity is dispensable for immune functions. The protein is Protein EDS1 of Arabidopsis thaliana (Mouse-ear cress).